A 500-amino-acid chain; its full sequence is Cysteine-rich secretory protein LCCL domain-containing 1 (500 aa).

Positions 1–23 are cleaved as a signal peptide; sequence MKCTAREWLRVTTVLFMARAIPA. Residues 66-206 form the SCP domain; sequence LDLHNKLRSQ…PKAVYLVCNY (141 aa). Basic and acidic residues predominate over residues 254-280; sequence EETNEIERQQSQVHDTHVRTRSDDSSR. The segment at 254–281 is disordered; that stretch reads EETNEIERQQSQVHDTHVRTRSDDSSRN. LCCL domains are found at residues 289 to 384 and 390 to 492; these read MSQI…ANSF and TVQA…PGGK. 4 disulfides stabilise this stretch: cysteine 295–cysteine 313, cysteine 317–cysteine 337, cysteine 396–cysteine 418, and cysteine 422–cysteine 445.

This sequence belongs to the CRISP family.

It localises to the secreted. The protein is Cysteine-rich secretory protein LCCL domain-containing 1 (CRISPLD1) of Homo sapiens (Human).